The sequence spans 349 residues: Probable dual-specificity RNA methyltransferase RlmN (349 aa).

Glutamate 93 (proton acceptor) is an active-site residue. One can recognise a Radical SAM core domain in the interval 99-329 (YKHGNTICVS…TTIRREMGSD (231 aa)). An intrachain disulfide couples cysteine 106 to cysteine 334. Residues cysteine 113, cysteine 117, and cysteine 120 each contribute to the [4Fe-4S] cluster site. S-adenosyl-L-methionine is bound by residues 160-161 (GE), serine 192, 215-217 (SLH), and asparagine 291. The active-site S-methylcysteine intermediate is the cysteine 334.

This sequence belongs to the radical SAM superfamily. RlmN family. Requires [4Fe-4S] cluster as cofactor.

Its subcellular location is the cytoplasm. The catalysed reaction is adenosine(2503) in 23S rRNA + 2 reduced [2Fe-2S]-[ferredoxin] + 2 S-adenosyl-L-methionine = 2-methyladenosine(2503) in 23S rRNA + 5'-deoxyadenosine + L-methionine + 2 oxidized [2Fe-2S]-[ferredoxin] + S-adenosyl-L-homocysteine. It carries out the reaction adenosine(37) in tRNA + 2 reduced [2Fe-2S]-[ferredoxin] + 2 S-adenosyl-L-methionine = 2-methyladenosine(37) in tRNA + 5'-deoxyadenosine + L-methionine + 2 oxidized [2Fe-2S]-[ferredoxin] + S-adenosyl-L-homocysteine. Specifically methylates position 2 of adenine 2503 in 23S rRNA and position 2 of adenine 37 in tRNAs. The sequence is that of Probable dual-specificity RNA methyltransferase RlmN from Clostridium tetani (strain Massachusetts / E88).